A 1056-amino-acid chain; its full sequence is Carbamoyl phosphate synthase large chain (1056 aa).

A carboxyphosphate synthetic domain region spans residues 1 to 401 (MPKRTDIHKI…ALHKAVRSLE (401 aa)). The ATP site is built by Arg-129, Arg-169, Gly-175, Gly-176, Lys-208, Ile-210, Glu-215, Gly-241, Ile-242, His-243, Gln-284, and Glu-298. The ATP-grasp 1 domain maps to 133–327 (KELMNELGEP…IAKMAAKIAV (195 aa)). Mg(2+)-binding residues include Gln-284, Glu-298, and Asn-300. The Mn(2+) site is built by Gln-284, Glu-298, and Asn-300. The oligomerization domain stretch occupies residues 402–546 (IDEKDLFSAE…YSAYDHENES (145 aa)). The carbamoyl phosphate synthetic domain stretch occupies residues 547 to 929 (QRTKKPSILV…ALHKAFSGAH (383 aa)). The region spanning 671–861 (DQVITDLNLK…MAQVATRVIL (191 aa)) is the ATP-grasp 2 domain. Residues Arg-707, Ala-746, Leu-748, Glu-752, Gly-777, Val-778, His-779, Ser-780, Gln-820, and Glu-832 each contribute to the ATP site. Gln-820, Glu-832, and Asn-834 together coordinate Mg(2+). Residues Gln-820, Glu-832, and Asn-834 each coordinate Mn(2+). Residues 930-1056 (IQVPNDGKIL…DQSLEAITIK (127 aa)) enclose the MGS-like domain. The allosteric domain stretch occupies residues 930–1056 (IQVPNDGKIL…DQSLEAITIK (127 aa)).

The protein belongs to the CarB family. Composed of two chains; the small (or glutamine) chain promotes the hydrolysis of glutamine to ammonia, which is used by the large (or ammonia) chain to synthesize carbamoyl phosphate. Tetramer of heterodimers (alpha,beta)4. Requires Mg(2+) as cofactor. The cofactor is Mn(2+).

The enzyme catalyses hydrogencarbonate + L-glutamine + 2 ATP + H2O = carbamoyl phosphate + L-glutamate + 2 ADP + phosphate + 2 H(+). It carries out the reaction hydrogencarbonate + NH4(+) + 2 ATP = carbamoyl phosphate + 2 ADP + phosphate + 2 H(+). The protein operates within amino-acid biosynthesis; L-arginine biosynthesis; carbamoyl phosphate from bicarbonate: step 1/1. It functions in the pathway pyrimidine metabolism; UMP biosynthesis via de novo pathway; (S)-dihydroorotate from bicarbonate: step 1/3. Functionally, large subunit of the glutamine-dependent carbamoyl phosphate synthetase (CPSase). CPSase catalyzes the formation of carbamoyl phosphate from the ammonia moiety of glutamine, carbonate, and phosphate donated by ATP, constituting the first step of 2 biosynthetic pathways, one leading to arginine and/or urea and the other to pyrimidine nucleotides. The large subunit (synthetase) binds the substrates ammonia (free or transferred from glutamine from the small subunit), hydrogencarbonate and ATP and carries out an ATP-coupled ligase reaction, activating hydrogencarbonate by forming carboxy phosphate which reacts with ammonia to form carbamoyl phosphate. This Limosilactobacillus reuteri (strain DSM 20016) (Lactobacillus reuteri) protein is Carbamoyl phosphate synthase large chain.